The following is a 292-amino-acid chain: ATP synthase subunit a (292 aa).

A run of 6 helical transmembrane segments spans residues 37 to 57 (IDSV…FWLC), 96 to 116 (FIAP…AMDM), 144 to 164 (VVPT…LVLC), 192 to 212 (PVFA…EYVA), 230 to 250 (LVFM…SGVL), and 263 to 283 (AIFH…LALI).

It belongs to the ATPase A chain family. F-type ATPases have 2 components, CF(1) - the catalytic core - and CF(0) - the membrane proton channel. CF(1) has five subunits: alpha(3), beta(3), gamma(1), delta(1), epsilon(1). CF(0) has three main subunits: a(1), b(2) and c(9-12). The alpha and beta chains form an alternating ring which encloses part of the gamma chain. CF(1) is attached to CF(0) by a central stalk formed by the gamma and epsilon chains, while a peripheral stalk is formed by the delta and b chains.

The protein resides in the cell inner membrane. In terms of biological role, key component of the proton channel; it plays a direct role in the translocation of protons across the membrane. This Paracidovorax citrulli (strain AAC00-1) (Acidovorax citrulli) protein is ATP synthase subunit a.